The sequence spans 441 residues: Glutamate--tRNA ligase 1 (441 aa).

Residues 9-19 (PSPTGFIHVGN) carry the 'HIGH' region motif. The 'KMSKS' region signature appears at 239–243 (ALSKR). K242 contributes to the ATP binding site.

It belongs to the class-I aminoacyl-tRNA synthetase family. Glutamate--tRNA ligase type 1 subfamily. In terms of assembly, monomer.

The protein resides in the cytoplasm. The enzyme catalyses tRNA(Glu) + L-glutamate + ATP = L-glutamyl-tRNA(Glu) + AMP + diphosphate. Functionally, catalyzes the attachment of glutamate to tRNA(Glu) in a two-step reaction: glutamate is first activated by ATP to form Glu-AMP and then transferred to the acceptor end of tRNA(Glu). The chain is Glutamate--tRNA ligase 1 from Cereibacter sphaeroides (strain ATCC 17025 / ATH 2.4.3) (Rhodobacter sphaeroides).